The following is a 34-amino-acid chain: Cytochrome b6-f complex subunit 7 (34 aa).

The helical transmembrane segment at A9–L27 threads the bilayer.

This sequence belongs to the PetM family. As to quaternary structure, the 4 large subunits of the cytochrome b6-f complex are cytochrome b6, subunit IV (17 kDa polypeptide, PetD), cytochrome f and the Rieske protein, while the 4 small subunits are PetG, PetL, PetM and PetN. The complex functions as a dimer.

It is found in the cellular thylakoid membrane. In terms of biological role, component of the cytochrome b6-f complex, which mediates electron transfer between photosystem II (PSII) and photosystem I (PSI), cyclic electron flow around PSI, and state transitions. This chain is Cytochrome b6-f complex subunit 7, found in Nostoc punctiforme (strain ATCC 29133 / PCC 73102).